Here is a 635-residue protein sequence, read N- to C-terminus: Cell pattern formation-associated protein stuA (635 aa).

2 disordered regions span residues 1 to 21 and 63 to 82; these read MNQTQPYMDVHSSHLSSAQPY and SGVASSQTAPPPPSTSMSSQ. An HTH APSES-type domain is found at 129–235; that stretch reads RVTATLWEDE…HNIGGLLYHP (107 aa). The H-T-H motif DNA-binding region spans 163–184; it reads GTKLLNVAGMTRGRRDGILKSE. Disordered stretches follow at residues 246-480 and 498-635; these read QESQ…ASRS and SQLT…PRRR. 2 stretches are compositionally biased toward low complexity: residues 276–294 and 312–325; these read MQTSIPSQMPQPPTMSSQP and SASSLMGLSNQSSS. The segment covering 326–355 has biased composition (polar residues); it reads YDWNNQGMNSGVPNTQPLSIDTTLSNTRSM. The segment covering 356 to 380 has biased composition (low complexity); sequence PTTPATTPPGNNLQGMQSYQSQSGY. Basic and acidic residues predominate over residues 460 to 469; the sequence is APEHESEYVQ. 2 stretches are compositionally biased toward polar residues: residues 498 to 513 and 539 to 571; these read SQLTNDITGSPQQNGS and AASSLYNIVSDTRGSSNGAGSENYTVASNTAPT. A nuclear localization domain region spans residues 582 to 605; sequence KRGREDDDMGRPDSQGDYESKRRR. Residues 583-592 show a composition bias toward basic and acidic residues; the sequence is RGREDDDMGR.

This sequence belongs to the EFG1/PHD1/stuA family.

Transcription factor that regulates asexual reproduction. Binds the StuA-response elements (StRE) with the consensus sequence 5'-(A/T)CGCG(T/A)N(A/C)-3' at the promoters of target genes. Controls the expression of 6 secondary metabolite biosynthetic clusters including 2 involved in the synthesis of alkaloids (fumigaclavine and fumitremorgen), 2 clusters of the ETP class (gliotoxin and an unknown ETP-like toxin), a cluster predicted to produce pseurotin A, and the product of the last cluster is unknown. Controls the production of ergot alkaloids during conidiophore development. Controls expression of sspA and gliP. Involved in the induction of immunoglobulin E-independent mast cell degranulation. This Aspergillus fumigatus (strain ATCC MYA-4609 / CBS 101355 / FGSC A1100 / Af293) (Neosartorya fumigata) protein is Cell pattern formation-associated protein stuA.